Reading from the N-terminus, the 388-residue chain is Succinate--CoA ligase [ADP-forming] subunit beta (388 aa).

An ATP-grasp domain is found at 9-244 (KQLFAEYGLP…PSQDDPREAH (236 aa)). Residues K46, 53 to 55 (GRG), E99, T102, and E107 each bind ATP. N199 and D213 together coordinate Mg(2+). Residues N264 and 321–323 (GIV) each bind substrate.

The protein belongs to the succinate/malate CoA ligase beta subunit family. In terms of assembly, heterotetramer of two alpha and two beta subunits. Mg(2+) serves as cofactor.

The catalysed reaction is succinate + ATP + CoA = succinyl-CoA + ADP + phosphate. The enzyme catalyses GTP + succinate + CoA = succinyl-CoA + GDP + phosphate. It participates in carbohydrate metabolism; tricarboxylic acid cycle; succinate from succinyl-CoA (ligase route): step 1/1. In terms of biological role, succinyl-CoA synthetase functions in the citric acid cycle (TCA), coupling the hydrolysis of succinyl-CoA to the synthesis of either ATP or GTP and thus represents the only step of substrate-level phosphorylation in the TCA. The beta subunit provides nucleotide specificity of the enzyme and binds the substrate succinate, while the binding sites for coenzyme A and phosphate are found in the alpha subunit. The protein is Succinate--CoA ligase [ADP-forming] subunit beta of Pseudomonas fluorescens (strain SBW25).